The sequence spans 610 residues: Zinc metalloproteinase-disintegrin-like acurhagin (610 aa).

An N-terminal signal peptide occupies residues 1 to 20; it reads MIQVLLVTICLAAFPYQGSS. A propeptide spanning residues 21-191 is cleaved from the precursor; that stretch reads IILESGDVND…ISQLNLIPEQ (171 aa). Gln-192 bears the Pyrrolidone carboxylic acid mark. The 197-residue stretch at 198-394 folds into the Peptidase M12B domain; sequence KYVETVVVVD…HNPECIDNEP (197 aa). Ca(2+) is bound by residues Glu-201 and Asp-285. 3 cysteine pairs are disulfide-bonded: Cys-309–Cys-389, Cys-349–Cys-373, and Cys-351–Cys-356. A Zn(2+)-binding site is contributed by His-334. Glu-335 is an active-site residue. His-338 and His-344 together coordinate Zn(2+). Asn-372 carries an N-linked (GlcNAc...) asparagine glycan. Ca(2+) is bound by residues Cys-389, Asn-392, Asn-407, Leu-409, Glu-411, Glu-414, and Asp-417. The region spanning 402-488 is the Disintegrin domain; sequence PPLCGNELLE…ECPADVFHKN (87 aa). 14 cysteine pairs are disulfide-bonded: Cys-405–Cys-434, Cys-416–Cys-429, Cys-418–Cys-424, Cys-428–Cys-451, Cys-442–Cys-448, Cys-447–Cys-473, Cys-460–Cys-480, Cys-467–Cys-499, Cys-492–Cys-504, Cys-511–Cys-561, Cys-526–Cys-572, Cys-539–Cys-549, Cys-556–Cys-598, and Cys-592–Cys-603. The short motif at 466–468 is the D/ECD-tripeptide element; the sequence is ECD. Ca(2+) contacts are provided by Asp-468, Pro-469, Glu-471, Asp-483, and Val-484.

It belongs to the venom metalloproteinase (M12B) family. P-III subfamily. P-IIIa sub-subfamily. Monomer. Requires Zn(2+) as cofactor. Post-translationally, N-glycosylated. In terms of tissue distribution, expressed by the venom gland.

The protein localises to the secreted. With respect to regulation, the proteinase activity is slightly enhanced by Ca(2+) and Mg(2+), but is completely inhibited by Zn(2+). Is completely inhibited by phenanthroline and EDTA. Not inhibited by PMSF. Snake venom zinc metalloprotease that causes hemorrhage and dose-dependently inhibits platelet aggregation triggered by collagen. This inhibition is due to its binding to glycoprotein VI (GP6) and collagen. The binding to GP6 results in inhibition of the signaling pathway (decrease of tyrosine phosphorylation of signaling proteins such as Syk, LAT, PI3-K and PLCgamma2). Preferentially cleaves alpha chain (FGA) of fibrinogen, followed by beta chain (FGB). Also degrades the extracellular matrix protein fibronectin (FN1), and cleaves collagen and von Willebrand factor (VWF). The protein is Zinc metalloproteinase-disintegrin-like acurhagin of Deinagkistrodon acutus (Hundred-pace snake).